A 339-amino-acid polypeptide reads, in one-letter code: Heat-inducible transcription repressor HrcA (339 aa).

The protein belongs to the HrcA family.

Functionally, negative regulator of class I heat shock genes (grpE-dnaK-dnaJ and groELS operons). Prevents heat-shock induction of these operons. This chain is Heat-inducible transcription repressor HrcA, found in Leifsonia xyli subsp. xyli (strain CTCB07).